Consider the following 354-residue polypeptide: NADH-quinone oxidoreductase subunit H 2 (354 aa).

The next 8 membrane-spanning stretches (helical) occupy residues 4 to 24 (IALFLLVALIKVVLVIFVLLT), 81 to 101 (ILAPMLAVAMALLSISIVPFG), 130 to 150 (IGLLIILGVTSIGVYGIALAG), 170 to 190 (VSYEVSLGLSLVGVLLLSGSF), 201 to 221 (GGFWNWNIFGGFQFIAFFIYL), 269 to 289 (VACIASILFLGGWSGPVPGFL), 296 to 316 (LVPVFWFCLRIFAFLFIYIWV), and 333 to 353 (WKFLLPLSIANIMVTALFVAL).

Belongs to the complex I subunit 1 family. As to quaternary structure, NDH-1 is composed of 14 different subunits. Subunits NuoA, H, J, K, L, M, N constitute the membrane sector of the complex.

Its subcellular location is the cell inner membrane. The enzyme catalyses a quinone + NADH + 5 H(+)(in) = a quinol + NAD(+) + 4 H(+)(out). In terms of biological role, NDH-1 shuttles electrons from NADH, via FMN and iron-sulfur (Fe-S) centers, to quinones in the respiratory chain. The immediate electron acceptor for the enzyme in this species is believed to be ubiquinone. Couples the redox reaction to proton translocation (for every two electrons transferred, four hydrogen ions are translocated across the cytoplasmic membrane), and thus conserves the redox energy in a proton gradient. This subunit may bind ubiquinone. In Koribacter versatilis (strain Ellin345), this protein is NADH-quinone oxidoreductase subunit H 2.